A 513-amino-acid chain; its full sequence is Putative ATP-dependent RNA helicase QP509L (513 aa).

The region spanning 110–262 is the Helicase ATP-binding domain; the sequence is KKLLSPYGRF…KIIIHHLGQP (153 aa). 123 to 130 lines the ATP pocket; sequence LNTGLGKT. The DEAH box motif lies at 215–218; the sequence is DEAH.

Belongs to the DEAD box helicase family. DEAH subfamily.

It catalyses the reaction ATP + H2O = ADP + phosphate + H(+). The polypeptide is Putative ATP-dependent RNA helicase QP509L (Ornithodoros (relapsing fever ticks)).